A 97-amino-acid polypeptide reads, in one-letter code: Large ribosomal subunit protein uL23 (97 aa).

Belongs to the universal ribosomal protein uL23 family. In terms of assembly, part of the 50S ribosomal subunit. Contacts protein L29, and trigger factor when it is bound to the ribosome.

One of the early assembly proteins it binds 23S rRNA. One of the proteins that surrounds the polypeptide exit tunnel on the outside of the ribosome. Forms the main docking site for trigger factor binding to the ribosome. This is Large ribosomal subunit protein uL23 from Brachyspira hyodysenteriae (strain ATCC 49526 / WA1).